Consider the following 404-residue polypeptide: Putative transporter AmpG 2 (404 aa).

12 helical membrane-spanning segments follow: residues 11–31 (IYNILFILFISLPGGLIYLLT), 49–69 (IGLFSLVNFIHIFKFLWGPLL), 84–104 (YCLIFSLLSCICCVYILTGFN), 109–129 (FISFSLCLIILAFFSSIYDML), 154–174 (FRIGILISGSGALYLSTIISW), 177–197 (VYRTMAILCVPSLLLIIFYPL), 224–244 (WLIIVGFMLLYRLQDNFLAVM), 261–281 (LGYKAFGMCATIAGGFIGGFL), 294–311 (VLVYHALSSITFLLLYSY), 315–337 (ITTLYIAVFLQEFTKGLTMSPFF), 353–373 (IALITSIAYISTVLFGSISGY), and 378–398 (LGWGYFFAIASFCFIPAYILI).

Belongs to the major facilitator superfamily.

It is found in the cell inner membrane. This chain is Putative transporter AmpG 2 (ampG2), found in Rickettsia bellii (strain RML369-C).